The following is a 121-amino-acid chain: Basic phospholipase A2 daboxin P (121 aa).

7 cysteine pairs are disulfide-bonded: C26-C115, C28-C44, C43-C95, C49-C121, C50-C88, C57-C81, and C75-C86. Positions 27, 29, and 31 each coordinate Ca(2+). Residue H47 is part of the active site. D48 contributes to the Ca(2+) binding site. The active site involves D89.

Ca(2+) serves as cofactor. As to expression, expressed by the venom gland.

It is found in the secreted. It catalyses the reaction a 1,2-diacyl-sn-glycero-3-phosphocholine + H2O = a 1-acyl-sn-glycero-3-phosphocholine + a fatty acid + H(+). Snake venom phospholipase A2 (PLA2) that exhibits anticoagulant activity, probably by binding to factor X and its activated form factor Xa (F10). Shows no cytotoxicity. PLA2 catalyzes the calcium-dependent hydrolysis of the 2-acyl groups in 3-sn-phosphoglycerides. The chain is Basic phospholipase A2 daboxin P from Daboia russelii (Russel's viper).